A 468-amino-acid chain; its full sequence is 3-isopropylmalate dehydratase large subunit (468 aa).

Cys-348, Cys-409, and Cys-412 together coordinate [4Fe-4S] cluster.

This sequence belongs to the aconitase/IPM isomerase family. LeuC type 1 subfamily. Heterodimer of LeuC and LeuD. The cofactor is [4Fe-4S] cluster.

The catalysed reaction is (2R,3S)-3-isopropylmalate = (2S)-2-isopropylmalate. The protein operates within amino-acid biosynthesis; L-leucine biosynthesis; L-leucine from 3-methyl-2-oxobutanoate: step 2/4. In terms of biological role, catalyzes the isomerization between 2-isopropylmalate and 3-isopropylmalate, via the formation of 2-isopropylmaleate. This Dechloromonas aromatica (strain RCB) protein is 3-isopropylmalate dehydratase large subunit.